Reading from the N-terminus, the 160-residue chain is Nucleotide-binding protein Ping_2261 (160 aa).

This sequence belongs to the YajQ family.

Nucleotide-binding protein. The chain is Nucleotide-binding protein Ping_2261 from Psychromonas ingrahamii (strain DSM 17664 / CCUG 51855 / 37).